Reading from the N-terminus, the 156-residue chain is Small ribosomal subunit protein uS7 (156 aa).

It belongs to the universal ribosomal protein uS7 family. As to quaternary structure, part of the 30S ribosomal subunit. Contacts proteins S9 and S11.

In terms of biological role, one of the primary rRNA binding proteins, it binds directly to 16S rRNA where it nucleates assembly of the head domain of the 30S subunit. Is located at the subunit interface close to the decoding center, probably blocks exit of the E-site tRNA. This chain is Small ribosomal subunit protein uS7, found in Desulfitobacterium hafniense (strain Y51).